A 38-amino-acid polypeptide reads, in one-letter code: Large ribosomal subunit protein bL36 (38 aa).

It belongs to the bacterial ribosomal protein bL36 family.

The sequence is that of Large ribosomal subunit protein bL36 from Synechocystis sp. (strain ATCC 27184 / PCC 6803 / Kazusa).